The primary structure comprises 180 residues: MKKKTEILDAASIQRALTRMSHEILEKNKGGENLVLIGIKTRGVPLAKRIQQKIKQIESIEVPLGELDITMYRDDLDKVSEQEDPKINSVSIGMDITDKHVILIDDVLFTGRTVRAAMDAVMDVGRPSTIQLGSLVDRGHRELPIRADYVGKNIPTSDREIVVVQLSEQDQEDRVSLYEK.

The short motif at V101–T113 is the PRPP-binding element.

This sequence belongs to the purine/pyrimidine phosphoribosyltransferase family. PyrR subfamily. In terms of assembly, homodimer and homohexamer; in equilibrium.

The enzyme catalyses UMP + diphosphate = 5-phospho-alpha-D-ribose 1-diphosphate + uracil. In terms of biological role, regulates transcriptional attenuation of the pyrimidine nucleotide (pyr) operon by binding in a uridine-dependent manner to specific sites on pyr mRNA. This disrupts an antiterminator hairpin in the RNA and favors formation of a downstream transcription terminator, leading to a reduced expression of downstream genes. Its function is as follows. Also displays a weak uracil phosphoribosyltransferase activity which is not physiologically significant. In Oceanobacillus iheyensis (strain DSM 14371 / CIP 107618 / JCM 11309 / KCTC 3954 / HTE831), this protein is Bifunctional protein PyrR.